Consider the following 106-residue polypeptide: UPF0145 protein CLH_2273 (106 aa).

This sequence belongs to the UPF0145 family.

This chain is UPF0145 protein CLH_2273, found in Clostridium botulinum (strain Alaska E43 / Type E3).